A 372-amino-acid polypeptide reads, in one-letter code: Glutamate 5-kinase (372 aa).

Residue lysine 14 coordinates ATP. The substrate site is built by serine 54, aspartate 141, and asparagine 153. ATP is bound by residues 173–174 (TD) and 215–221 (TGGMATK). The PUA domain occupies 280-358 (KGKLVLDVGA…DEIESLLGYD (79 aa)).

Belongs to the glutamate 5-kinase family.

The protein localises to the cytoplasm. The catalysed reaction is L-glutamate + ATP = L-glutamyl 5-phosphate + ADP. It participates in amino-acid biosynthesis; L-proline biosynthesis; L-glutamate 5-semialdehyde from L-glutamate: step 1/2. Functionally, catalyzes the transfer of a phosphate group to glutamate to form L-glutamate 5-phosphate. The polypeptide is Glutamate 5-kinase (Shewanella woodyi (strain ATCC 51908 / MS32)).